The chain runs to 142 residues: Large ribosomal subunit protein uL13 (142 aa).

Belongs to the universal ribosomal protein uL13 family. Part of the 50S ribosomal subunit.

In terms of biological role, this protein is one of the early assembly proteins of the 50S ribosomal subunit, although it is not seen to bind rRNA by itself. It is important during the early stages of 50S assembly. This Agathobacter rectalis (strain ATCC 33656 / DSM 3377 / JCM 17463 / KCTC 5835 / VPI 0990) (Eubacterium rectale) protein is Large ribosomal subunit protein uL13.